The sequence spans 86 residues: Cell division topological specificity factor (86 aa).

The protein belongs to the MinE family.

Functionally, prevents the cell division inhibition by proteins MinC and MinD at internal division sites while permitting inhibition at polar sites. This ensures cell division at the proper site by restricting the formation of a division septum at the midpoint of the long axis of the cell. The sequence is that of Cell division topological specificity factor from Alteromonas mediterranea (strain DSM 17117 / CIP 110805 / LMG 28347 / Deep ecotype).